The sequence spans 438 residues: uncharacterized protein (438 aa).

The first 32 residues, 1–32 (MARPLLGKTSSVRRRLESLSACSIFFFLRKFC), serve as a signal peptide directing secretion.

This is an uncharacterized protein from Frog virus 3 (isolate Goorha) (FV-3).